The primary structure comprises 111 residues: Distal membrane-arm assembly complex protein 1 (111 aa).

Residues 1–11 (MGSSFSGSTEF) show a composition bias toward polar residues. Residues 1 to 40 (MGSSFSGSTEFSAPAPPTVSTAVPANPPAKSAVPASPARD) are disordered. Low complexity predominate over residues 18 to 38 (TVSTAVPANPPAKSAVPASPA). The next 2 membrane-spanning stretches (helical) occupy residues 51–68 (VLSG…YLVA) and 81–101 (GTVL…VVLV).

Interacts with incompletely assembled mitochondrial NADH:ubiquinone oxidoreductase complex (complex I).

Its subcellular location is the mitochondrion inner membrane. Functionally, required for the assembly of the mitochondrial NADH:ubiquinone oxidoreductase complex (complex I). Involved in the assembly of the distal region of complex I. The polypeptide is Distal membrane-arm assembly complex protein 1 (Mus musculus (Mouse)).